Here is a 455-residue protein sequence, read N- to C-terminus: Ribulose bisphosphate carboxylase large chain (455 aa).

K5 is subject to N6,N6,N6-trimethyllysine. The substrate site is built by N114 and T164. Catalysis depends on K166, which acts as the Proton acceptor. K168 is a binding site for substrate. K192, D194, and E195 together coordinate Mg(2+). K192 bears the N6-carboxylysine mark. H285 functions as the Proton acceptor in the catalytic mechanism. Substrate-binding residues include R286, H318, and S370.

The protein belongs to the RuBisCO large chain family. Type I subfamily. Heterohexadecamer of 8 large chains and 8 small chains; disulfide-linked. The disulfide link is formed within the large subunit homodimers. Mg(2+) serves as cofactor. The disulfide bond which can form in the large chain dimeric partners within the hexadecamer appears to be associated with oxidative stress and protein turnover.

It localises to the plastid. The protein localises to the chloroplast. The catalysed reaction is 2 (2R)-3-phosphoglycerate + 2 H(+) = D-ribulose 1,5-bisphosphate + CO2 + H2O. The enzyme catalyses D-ribulose 1,5-bisphosphate + O2 = 2-phosphoglycolate + (2R)-3-phosphoglycerate + 2 H(+). Its function is as follows. RuBisCO catalyzes two reactions: the carboxylation of D-ribulose 1,5-bisphosphate, the primary event in carbon dioxide fixation, as well as the oxidative fragmentation of the pentose substrate in the photorespiration process. Both reactions occur simultaneously and in competition at the same active site. In Lupinus cosentinii (West Australian blue lupine), this protein is Ribulose bisphosphate carboxylase large chain.